We begin with the raw amino-acid sequence, 76 residues long: Exodeoxyribonuclease 7 small subunit (76 aa).

This sequence belongs to the XseB family. As to quaternary structure, heterooligomer composed of large and small subunits.

The protein localises to the cytoplasm. The enzyme catalyses Exonucleolytic cleavage in either 5'- to 3'- or 3'- to 5'-direction to yield nucleoside 5'-phosphates.. Functionally, bidirectionally degrades single-stranded DNA into large acid-insoluble oligonucleotides, which are then degraded further into small acid-soluble oligonucleotides. The sequence is that of Exodeoxyribonuclease 7 small subunit from Geotalea daltonii (strain DSM 22248 / JCM 15807 / FRC-32) (Geobacter daltonii).